A 309-amino-acid chain; its full sequence is Homoserine O-succinyltransferase (309 aa).

Catalysis depends on C142, which acts as the Acyl-thioester intermediate. Substrate contacts are provided by K163 and S192. The active-site Proton acceptor is the H235. E237 is an active-site residue. Residue R249 coordinates substrate.

The protein belongs to the MetA family. As to quaternary structure, homodimer.

The protein resides in the cytoplasm. The enzyme catalyses L-homoserine + succinyl-CoA = O-succinyl-L-homoserine + CoA. The protein operates within amino-acid biosynthesis; L-methionine biosynthesis via de novo pathway; O-succinyl-L-homoserine from L-homoserine: step 1/1. Transfers a succinyl group from succinyl-CoA to L-homoserine, forming succinyl-L-homoserine. The protein is Homoserine O-succinyltransferase of Escherichia fergusonii (strain ATCC 35469 / DSM 13698 / CCUG 18766 / IAM 14443 / JCM 21226 / LMG 7866 / NBRC 102419 / NCTC 12128 / CDC 0568-73).